The following is a 346-amino-acid chain: MTMNNPNLTMIARNWRDLIRPKGISIDAESGTQFYAKFTCEPLERGFGITIGNSLRRVLLSSLQGAAATAIRIEGALHEFTTVPDVVEDVSDIILNVKEVVFKAATPKTYSVRIDREGPGPVYARDIQLVEGLSVLNPDHLIAVLDKKGPLSMELTVNVGRGYVPAERNKTPTMPIGTIPIDALFSPIRKVNYTVQNARVGQVTDYDKLTLEVWTNGSVSPADAVAFAAKILKEQLSIWVNFEESEETSYQAVMSDDEPLNENLFRSVEELELSVRSANCLQNANITLIGELVQRTEQDMLKTKNFGRKSLKEIKEILANMGLSLGMKIDNWPQLLERWKAQQAQA.

Positions 1–243 (MTMNNPNLTM…EQLSIWVNFE (243 aa)) are alpha N-terminal domain (alpha-NTD). An alpha C-terminal domain (alpha-CTD) region spans residues 260–346 (LNENLFRSVE…ERWKAQQAQA (87 aa)).

This sequence belongs to the RNA polymerase alpha chain family. In terms of assembly, homodimer. The RNAP catalytic core consists of 2 alpha, 1 beta, 1 beta' and 1 omega subunit. When a sigma factor is associated with the core the holoenzyme is formed, which can initiate transcription.

It carries out the reaction RNA(n) + a ribonucleoside 5'-triphosphate = RNA(n+1) + diphosphate. Its function is as follows. DNA-dependent RNA polymerase catalyzes the transcription of DNA into RNA using the four ribonucleoside triphosphates as substrates. This chain is DNA-directed RNA polymerase subunit alpha, found in Sorangium cellulosum (strain So ce56) (Polyangium cellulosum (strain So ce56)).